Here is a 439-residue protein sequence, read N- to C-terminus: Lactamase-like protein nscB (439 aa).

4 residues coordinate Zn(2+): H214, H216, D218, and H219. Residue D218 is the Proton donor/acceptor of the active site.

The protein belongs to the metallo-beta-lactamase superfamily. Zn(2+) serves as cofactor.

Its pathway is secondary metabolite biosynthesis. Lactamase-like protein; part of the gene cluster that mediates the biosynthesis of neosartoricin B, a prenylated anthracenone that probably exhibits T-cell antiproliferative activity, suggestive of a physiological role as an immunosuppressive agent. The non-reducing polyketide synthase nscA probably synthesizes and cyclizes the decaketide backbone. The hydrolase nscB then mediates the product release through hydrolysis followed by spontaneous decarboxylation. The prenyltransferase nscD catalyzes the addition of the dimethylallyl group to the aromatic C5. The FAD-dependent monooxygenase nscC is then responsible for the stereospecific hydroxylation at C2. Neosartoricin B can be converted into two additional compounds neosartoricins C and D. Neosartoricin C is a spirocyclic compound that is cyclized through the attack of C3 hydroxyl on C14, followed by dehydration. On the other hand, neosartoricin D is a further cyclized compound in which attack of C2 on C14 in neosartoricin C results in the formation of the acetal-containing dioxabicyclo-octanone ring. Both of these compounds are novel and possibly represent related metabolites of the gene cluster. The sequence is that of Lactamase-like protein nscB from Arthroderma benhamiae (strain ATCC MYA-4681 / CBS 112371) (Trichophyton mentagrophytes).